Reading from the N-terminus, the 137-residue chain is Small ribosomal subunit protein uS9c (137 aa).

The tract at residues 106–137 (KSEGYLTRDPRVKERKKYGLKKARKAPQFSKR) is disordered. Residues 118-137 (KERKKYGLKKARKAPQFSKR) are compositionally biased toward basic residues.

It belongs to the universal ribosomal protein uS9 family.

The protein localises to the plastid. It is found in the chloroplast. The sequence is that of Small ribosomal subunit protein uS9c (rps9) from Pyropia yezoensis (Susabi-nori).